A 402-amino-acid polypeptide reads, in one-letter code: Glutamate N-acetyltransferase (402 aa).

Substrate contacts are provided by Thr-146, Lys-172, Thr-185, Glu-267, Asn-397, and Thr-402. Thr-185 (nucleophile) is an active-site residue.

Belongs to the ArgJ family. Heterotetramer of two alpha and two beta chains.

The protein resides in the cytoplasm. The catalysed reaction is N(2)-acetyl-L-ornithine + L-glutamate = N-acetyl-L-glutamate + L-ornithine. The protein operates within amino-acid biosynthesis; L-arginine biosynthesis; L-ornithine and N-acetyl-L-glutamate from L-glutamate and N(2)-acetyl-L-ornithine (cyclic): step 1/1. With respect to regulation, competitively inhibited by L-ornithine. Its function is as follows. Catalyzes the transfer of the acetyl group from N(2)-acetylornithine to glutamate, forming N-acetylglutamate and L-ornithine. The polypeptide is Glutamate N-acetyltransferase (Methanocaldococcus jannaschii (strain ATCC 43067 / DSM 2661 / JAL-1 / JCM 10045 / NBRC 100440) (Methanococcus jannaschii)).